Here is an 898-residue protein sequence, read N- to C-terminus: Serine/threonine-protein kinase PKH3 (898 aa).

The 283-residue stretch at phenylalanine 11–phenylalanine 293 folds into the Protein kinase domain. ATP-binding positions include leucine 17–valine 25 and lysine 41. The Proton acceptor role is filled by aspartate 138. 2 disordered regions span residues proline 435 to glutamate 484 and aspartate 675 to serine 850. A compositionally biased stretch (polar residues) spans proline 459–lysine 468. The segment covering leucine 469–threonine 483 has biased composition (low complexity). A Phosphoserine modification is found at serine 696. Positions isoleucine 697 to asparagine 721 are enriched in polar residues. Residues glycine 723–proline 738 show a composition bias toward basic and acidic residues. Composition is skewed to polar residues over residues alanine 740–glycine 758, serine 771–serine 782, and arginine 789–threonine 803. Residue serine 753 is modified to Phosphoserine. Over residues serine 804–serine 817 the composition is skewed to low complexity. A compositionally biased stretch (polar residues) spans threonine 818–proline 831. Serine 871 is modified (phosphoserine).

It belongs to the protein kinase superfamily. Ser/Thr protein kinase family.

It catalyses the reaction L-seryl-[protein] + ATP = O-phospho-L-seryl-[protein] + ADP + H(+). The catalysed reaction is L-threonyl-[protein] + ATP = O-phospho-L-threonyl-[protein] + ADP + H(+). In terms of biological role, serine/threonine-protein kinase which may phosphorylate the same targets substrates as PKH1 and PKH2, 2 upstream activators of PKC1. In Saccharomyces cerevisiae (strain ATCC 204508 / S288c) (Baker's yeast), this protein is Serine/threonine-protein kinase PKH3 (PKH3).